Here is a 163-residue protein sequence, read N- to C-terminus: Cyclic pyranopterin monophosphate synthase (163 aa).

Substrate is bound by residues 78–80 (LCH) and 116–117 (ME). Asp131 is an active-site residue.

It belongs to the MoaC family. In terms of assembly, homohexamer; trimer of dimers.

The catalysed reaction is (8S)-3',8-cyclo-7,8-dihydroguanosine 5'-triphosphate = cyclic pyranopterin phosphate + diphosphate. It functions in the pathway cofactor biosynthesis; molybdopterin biosynthesis. In terms of biological role, catalyzes the conversion of (8S)-3',8-cyclo-7,8-dihydroguanosine 5'-triphosphate to cyclic pyranopterin monophosphate (cPMP). This Agrobacterium fabrum (strain C58 / ATCC 33970) (Agrobacterium tumefaciens (strain C58)) protein is Cyclic pyranopterin monophosphate synthase.